We begin with the raw amino-acid sequence, 197 residues long: Protein jagunal (197 aa).

Over 1–39 the chain is Cytoplasmic; it reads MATRGGPMVAGTDGNDFEFRQRVAGTYQISLLNKSRLKY. Residues 40-60 traverse the membrane as a helical segment; that stretch reads CIFFHALLFFVMLAKLTSDIL. The Lumenal segment spans residues 61–78; the sequence is DRLDIFVLEIEELEVPSP. A helical membrane pass occupies residues 79–99; sequence LWWEYVWAGSLLTSFLGLSAA. Over 100-109 the chain is Cytoplasmic; it reads RGNKVREMQK. The chain crosses the membrane as a helical span at residues 110–130; sequence YMIAILVFAILPLLYCFAYYF. Residues 131-159 lie on the Lumenal side of the membrane; sequence SDVWEFATMDKSVELDETDIFIWRGYPYG. A helical membrane pass occupies residues 160 to 180; it reads VFWYAFCFVGFQVHGFTLYFA. Residues 181–197 lie on the Cytoplasmic side of the membrane; the sequence is YNLVKVWKARTATRKFQ.

Belongs to the jagunal family.

It is found in the endoplasmic reticulum membrane. In terms of biological role, required for endoplasmic reticulum organization and proper vesicular traffic during vitellogenesis. Required for oocyte and bristle growth. The polypeptide is Protein jagunal (Drosophila pseudoobscura pseudoobscura (Fruit fly)).